The primary structure comprises 3080 residues: Protein PIEZO homolog (3080 aa).

Helical transmembrane passes span 28 to 48 (YIYF…SLIL), 57 to 77 (PIIT…VNVV), 86 to 106 (LSVN…WIVF), 113 to 133 (VIVF…LVYP), 204 to 224 (YPSI…LLLA), and 232 to 252 (VMLK…LFVY). N-linked (GlcNAc...) asparagine glycosylation occurs at N276. A helical transmembrane segment spans residues 285 to 305 (WPLVIGYITVLLLYISTCILF). 2 N-linked (GlcNAc...) asparagine glycosylation sites follow: N312 and N339. The next 2 membrane-spanning stretches (helical) occupy residues 362–382 (ILVV…LASG) and 396–416 (VIYI…IFNI). N-linked (GlcNAc...) asparagine glycosylation is present at N434. Residues 438 to 458 (WLYIGVQIVVSLTLSLYCFYS) form a helical membrane-spanning segment. The segment at 469 to 548 (KKDQQSQQSQ…GGGIIRPRKP (80 aa)) is disordered. Residues 473–505 (QSQQSQPQPQQQQQQQQSSQNNQIQQSPLQYQQ) show a composition bias toward low complexity. Positions 512 to 532 (ISNKSLPSSPMSTKSTTVHIQ) are enriched in polar residues. N514, N567, and N606 each carry an N-linked (GlcNAc...) asparagine glycan. Helical transmembrane passes span 672-692 (GLTS…VFVI), 700-720 (FWMC…IWQL), and 740-760 (YGSP…FSII). A glycan (N-linked (GlcNAc...) asparagine) is linked at N795. Transmembrane regions (helical) follow at residues 827–847 (FCYL…INIV), 849–869 (MATV…SIHI), and 872–892 (FWII…IMQF). N918 carries N-linked (GlcNAc...) asparagine glycosylation. The helical transmembrane segment at 928-948 (LFGCSSILVVCVFQLTVFFSI) threads the bilayer. N992 carries an N-linked (GlcNAc...) asparagine glycan. Helical transmembrane passes span 1036–1056 (FAIS…MIVI) and 1067–1087 (IGSF…AALL). N1109 carries N-linked (GlcNAc...) asparagine glycosylation. Residues 1158-1185 (QQQRKLEEHEEEYEEEEDQFGNKKNNDK) are disordered. The segment covering 1166–1176 (HEEEYEEEEDQ) has biased composition (acidic residues). N-linked (GlcNAc...) asparagine glycosylation is found at N1191, N1240, and N1251. Positions 1199–1253 (DDGNNNNNNNNNNNNNNNNNNNNNNNNNNNNNNNNNNNNNNNQSNNENNENNNNS) are disordered. Low complexity predominate over residues 1202–1252 (NNNNNNNNNNNNNNNNNNNNNNNNNNNNNNNNNNNNNNNQSNNENNENNNN). Transmembrane regions (helical) follow at residues 1281-1301 (VLAF…LIII), 1316-1336 (IYVS…ILVV), and 1360-1380 (LLLL…VLFF). N-linked (GlcNAc...) asparagine glycans are attached at residues N1424 and N1440. 2 helical membrane-spanning segments follow: residues 1472-1492 (VILI…SCFY) and 1519-1539 (IYNW…ILYF). N1559 and N1589 each carry an N-linked (GlcNAc...) asparagine glycan. The helical transmembrane segment at 1619–1639 (IETGPLSISTISDVIIMVLLA) threads the bilayer. A compositionally biased stretch (basic residues) spans 1704–1714 (RINRRKNRHNH). A disordered region spans residues 1704–1812 (RINRRKNRHN…NPLSNSSSTV (109 aa)). Low complexity predominate over residues 1715–1742 (YYNNNPNNNYNNNNNNNNSNSSNSNNNN). Residues N1731, N1734, N1763, N1768, N1771, N1779, N1807, and N1864 are each glycosylated (N-linked (GlcNAc...) asparagine). The span at 1762–1782 (KNTTNQNATNSTYSPFANSTM) shows a compositional bias: polar residues. Over residues 1789-1812 (NNNNNNNNNNNFNNNPLSNSSSTV) the composition is skewed to low complexity. 2 disordered regions span residues 1873–1899 (LQQE…SSKE) and 1958–2032 (SQLL…TSSS). Residues 1958 to 2021 (SQLLQQQQQQ…NNNNNNNNNN (64 aa)) are compositionally biased toward low complexity. N-linked (GlcNAc...) asparagine glycosylation is present at N2027. 2 helical membrane passes run 2078 to 2098 (IANG…AVFL) and 2112 to 2132 (FWRF…VFQI). The N-linked (GlcNAc...) asparagine glycan is linked to N2148. A helical transmembrane segment spans residues 2199-2219 (VFGLYIIDGHFISGAFWDLAI). Positions 2277–2367 (LNNSPISLNS…NNNNNNNNNN (91 aa)) are disordered. The N-linked (GlcNAc...) asparagine glycan is linked to N2285. A compositionally biased stretch (low complexity) spans 2288-2367 (NNNNNNNNNN…NNNNNNNNNN (80 aa)). A run of 2 helical transmembrane segments spans residues 2427-2447 (IIIY…WLAI) and 2457-2477 (YYMP…IFPQ). Residue N2478 is glycosylated (N-linked (GlcNAc...) asparagine). The next 4 membrane-spanning stretches (helical) occupy residues 2500–2520 (YIVI…IYLY), 2530–2550 (QIVL…DLIV), 2553–2573 (FSFG…IYLY), and 2671–2691 (FVTG…PLII). Residues N2762, N2790, N2837, N2840, N2848, N2858, N2908, N2913, and N2935 are each glycosylated (N-linked (GlcNAc...) asparagine). Residues 2835–2863 (QSNNSNNSNNPNENSSSGSDDNNNNSNNN) form a disordered region. The span at 2836–2863 (SNNSNNSNNPNENSSSGSDDNNNNSNNN) shows a compositional bias: low complexity. A helical membrane pass occupies residues 2955–2975 (ITSTLVSAGIIGLYVSVVLSV). Residues 3054–3080 (PTINSTLNNQNNQNNNNNNNNNHEKIN) are disordered. N3057 carries N-linked (GlcNAc...) asparagine glycosylation. A compositionally biased stretch (low complexity) spans 3061-3074 (NNQNNQNNNNNNNN).

It belongs to the PIEZO (TC 1.A.75) family.

The protein resides in the membrane. The polypeptide is Protein PIEZO homolog (Dictyostelium discoideum (Social amoeba)).